The following is a 754-amino-acid chain: Probable TonB-dependent siderophore receptor PirA (754 aa).

The N-terminal stretch at 1-24 is a signal peptide; that stretch reads MSKRIIQSVLSVSVLASMMSMAFA. In terms of domain architecture, TBDR plug spans 54–181; sequence EQVKQSLGVS…AGGVVNIITK (128 aa). Residues 186–754 enclose the TBDR beta-barrel domain; that stretch reads ETHGSVEFYT…AYYASLKYSF (569 aa). Polar residues predominate over residues 404–414; it reads VSTTQGKDSSG. The disordered stretch occupies residues 404-424; it reads VSTTQGKDSSGSGYGDQLAKG. An intrachain disulfide couples Cys-511 to Cys-519. Residues 737–754 carry the TonB C-terminal box motif; that stretch reads QTYNEPGRAYYASLKYSF.

The protein belongs to the TonB-dependent receptor family.

Its subcellular location is the cell outer membrane. Probably involved in the initial step of iron uptake by binding iron chelating siderophores, thereby allowing extraction of iron from the environment. May bind the siderophore, ferric enterobactin, with micromolar affinity. The sequence is that of Probable TonB-dependent siderophore receptor PirA from Acinetobacter baumannii (strain ATCC 19606 / DSM 30007 / JCM 6841 / CCUG 19606 / CIP 70.34 / NBRC 109757 / NCIMB 12457 / NCTC 12156 / 81).